A 388-amino-acid polypeptide reads, in one-letter code: Succinate--CoA ligase [ADP-forming] subunit beta (388 aa).

In terms of domain architecture, ATP-grasp spans 9–246 (KDILRQFGVP…FEEEDPAEVL (238 aa)). Residues K46, 53 to 55 (GRG), E99, A102, and E107 contribute to the ATP site. Positions 201 and 215 each coordinate Mg(2+). Substrate-binding positions include N266 and 323–325 (GIM).

This sequence belongs to the succinate/malate CoA ligase beta subunit family. In terms of assembly, heterotetramer of two alpha and two beta subunits. The cofactor is Mg(2+).

It carries out the reaction succinate + ATP + CoA = succinyl-CoA + ADP + phosphate. It catalyses the reaction GTP + succinate + CoA = succinyl-CoA + GDP + phosphate. Its pathway is carbohydrate metabolism; tricarboxylic acid cycle; succinate from succinyl-CoA (ligase route): step 1/1. Succinyl-CoA synthetase functions in the citric acid cycle (TCA), coupling the hydrolysis of succinyl-CoA to the synthesis of either ATP or GTP and thus represents the only step of substrate-level phosphorylation in the TCA. The beta subunit provides nucleotide specificity of the enzyme and binds the substrate succinate, while the binding sites for coenzyme A and phosphate are found in the alpha subunit. This Verminephrobacter eiseniae (strain EF01-2) protein is Succinate--CoA ligase [ADP-forming] subunit beta.